The following is a 433-amino-acid chain: 23S rRNA (uracil(1939)-C(5))-methyltransferase RlmD (433 aa).

The region spanning 1–53 (MPTAVIESLDHEGRGIARVEGKAVFIEGGLPGETVEYRVLRSKPNYEQAEATR) is the TRAM domain. [4Fe-4S] cluster-binding residues include C66, C72, C75, and C154. Positions 263, 292, 297, 313, 341, and 362 each coordinate S-adenosyl-L-methionine. The Nucleophile role is filled by C389.

This sequence belongs to the class I-like SAM-binding methyltransferase superfamily. RNA M5U methyltransferase family. RlmD subfamily.

The catalysed reaction is uridine(1939) in 23S rRNA + S-adenosyl-L-methionine = 5-methyluridine(1939) in 23S rRNA + S-adenosyl-L-homocysteine + H(+). Its function is as follows. Catalyzes the formation of 5-methyl-uridine at position 1939 (m5U1939) in 23S rRNA. The sequence is that of 23S rRNA (uracil(1939)-C(5))-methyltransferase RlmD from Azoarcus sp. (strain BH72).